A 92-amino-acid polypeptide reads, in one-letter code: Small ribosomal subunit protein bS20 (92 aa).

The interval 1-23 is disordered; sequence MANTPSAKKRAKQAEKRRSHNAS. Residues 7 to 20 show a composition bias toward basic residues; sequence AKKRAKQAEKRRSH.

This sequence belongs to the bacterial ribosomal protein bS20 family.

Functionally, binds directly to 16S ribosomal RNA. The sequence is that of Small ribosomal subunit protein bS20 from Pseudomonas fluorescens (strain SBW25).